The chain runs to 339 residues: Anthranilate phosphoribosyltransferase (339 aa).

5-phospho-alpha-D-ribose 1-diphosphate-binding positions include glycine 81, 84-85, threonine 89, 91-94, 109-117, and serine 121; these read GD, NIST, and KHGNRSVSS. Glycine 81 is a binding site for anthranilate. Mg(2+) is bound at residue serine 93. Asparagine 112 is an anthranilate binding site. Arginine 165 is a binding site for anthranilate. Positions 224 and 225 each coordinate Mg(2+).

The protein belongs to the anthranilate phosphoribosyltransferase family. As to quaternary structure, homodimer. Mg(2+) serves as cofactor.

It catalyses the reaction N-(5-phospho-beta-D-ribosyl)anthranilate + diphosphate = 5-phospho-alpha-D-ribose 1-diphosphate + anthranilate. Its pathway is amino-acid biosynthesis; L-tryptophan biosynthesis; L-tryptophan from chorismate: step 2/5. In terms of biological role, catalyzes the transfer of the phosphoribosyl group of 5-phosphorylribose-1-pyrophosphate (PRPP) to anthranilate to yield N-(5'-phosphoribosyl)-anthranilate (PRA). This chain is Anthranilate phosphoribosyltransferase, found in Thermosynechococcus vestitus (strain NIES-2133 / IAM M-273 / BP-1).